Reading from the N-terminus, the 356-residue chain is Transcription factor ATOH1 (356 aa).

Residues Met-1–Arg-21 are compositionally biased toward basic and acidic residues. Disordered stretches follow at residues Met-1–Ser-56 and Ser-92–Lys-125. Residues His-26–Pro-40 are compositionally biased toward pro residues. Residues Ala-96–Arg-109 are compositionally biased toward basic and acidic residues. The span at Arg-110 to Val-124 shows a compositional bias: low complexity. Residues Gln-161–Leu-213 enclose the bHLH domain. Disordered stretches follow at residues Gln-218–Ser-279 and Ser-314–Ser-356. Positions Asn-252–Gln-266 are enriched in low complexity. A compositionally biased stretch (basic and acidic residues) spans His-337–Ser-356.

In terms of assembly, efficient DNA binding requires dimerization with another bHLH protein.

It is found in the nucleus. Its function is as follows. Transcriptional regulator. Activates E box-dependent transcription in collaboration with TCF3/E47, but the activity is completely antagonized by the negative regulator of neurogenesis HES1. Plays a role in the differentiation of subsets of neural cells by activating E box-dependent transcription. In Pan troglodytes (Chimpanzee), this protein is Transcription factor ATOH1.